The primary structure comprises 488 residues: MTVSGTATGVRVRIAPSPTGEPHVGTAYIALFNYLFAKKHGGEFILRIEDTDATRSTPEFETKVLDALKWCGLEWKEGPDIGGPYGPYRQSDRKDMYQPYAQELLEKGHAFRCFCTPARLEQMRETQRAAGKPPKYDGLCLNLAAEEVTSRMAAGETTVIRMKIPTEGSCDFTDGVYGEVSIPWDSVDMQVLVKADGMPTYHMANVIDDHLMKITHVARGEEWLASVPKHILLYRYFGWDQPVFMHLSLMRNADKSKLSKRKNPTSISYYSALGYIPEALMNFLGLFFIQIAEGEELLTMDELSEKFDPENLSKAGAIFDIQKLDWLNGRWIREKLSEEEFQARVLTWAMENDRLKEGLRLSQTRISKLGELPDLAGFLLKSDLGLQPSDFAKIKSPPEEILEILNTVQPDLEKILEWNVETIEAELRAIADRMGKKLKVVVSPLFVAVSGSSRSLPLFDSMAILGRSVVRQRLKLASQAVAALVGSK.

A 'HIGH' region motif is present at residues 16-26 (PSPTGEPHVGT). The short motif at 257–261 (KLSKR) is the 'KMSKS' region element. Lys260 contributes to the ATP binding site.

This sequence belongs to the class-I aminoacyl-tRNA synthetase family. Glutamate--tRNA ligase type 1 subfamily. In terms of assembly, monomer.

It is found in the cytoplasm. The catalysed reaction is tRNA(Glu) + L-glutamate + ATP = L-glutamyl-tRNA(Glu) + AMP + diphosphate. Functionally, catalyzes the attachment of glutamate to tRNA(Glu) in a two-step reaction: glutamate is first activated by ATP to form Glu-AMP and then transferred to the acceptor end of tRNA(Glu). This chain is Glutamate--tRNA ligase, found in Rhizobium johnstonii (strain DSM 114642 / LMG 32736 / 3841) (Rhizobium leguminosarum bv. viciae).